The sequence spans 171 residues: Endoribonuclease YbeY (171 aa).

3 residues coordinate Zn(2+): His126, His130, and His136.

This sequence belongs to the endoribonuclease YbeY family. Requires Zn(2+) as cofactor.

Its subcellular location is the cytoplasm. Single strand-specific metallo-endoribonuclease involved in late-stage 70S ribosome quality control and in maturation of the 3' terminus of the 16S rRNA. The polypeptide is Endoribonuclease YbeY (Rhizobium leguminosarum bv. trifolii (strain WSM2304)).